The sequence spans 860 residues: Leucine--tRNA ligase (860 aa).

The 'HIGH' region signature appears at 42–52 (PYPSGRLHMGH). The 'KMSKS' region signature appears at 619–623 (KMSKS). Lysine 622 is an ATP binding site.

The protein belongs to the class-I aminoacyl-tRNA synthetase family.

The protein localises to the cytoplasm. The enzyme catalyses tRNA(Leu) + L-leucine + ATP = L-leucyl-tRNA(Leu) + AMP + diphosphate. This chain is Leucine--tRNA ligase, found in Yersinia pestis bv. Antiqua (strain Angola).